The primary structure comprises 72 residues: uncharacterized protein (72 aa).

This is an uncharacterized protein from Haemophilus influenzae (strain ATCC 51907 / DSM 11121 / KW20 / Rd).